The sequence spans 176 residues: Inorganic pyrophosphatase (176 aa).

Positions 30, 44, and 56 each coordinate substrate. Asp-66, Asp-71, and Asp-103 together coordinate Mg(2+). Substrate is bound at residue Tyr-142.

It belongs to the PPase family. Homohexamer. The cofactor is Mg(2+).

It is found in the cytoplasm. It catalyses the reaction diphosphate + H2O = 2 phosphate + H(+). In terms of biological role, catalyzes the hydrolysis of inorganic pyrophosphate (PPi) forming two phosphate ions. In Escherichia coli O157:H7, this protein is Inorganic pyrophosphatase.